A 598-amino-acid polypeptide reads, in one-letter code: Phospholipase B-like protein G (598 aa).

A signal peptide spans 1–24 (MIKSYYLFFIILIFLIFINNFILC). 9 N-linked (GlcNAc...) asparagine glycosylation sites follow: asparagine 50, asparagine 98, asparagine 173, asparagine 341, asparagine 368, asparagine 450, asparagine 480, asparagine 526, and asparagine 576.

Belongs to the phospholipase B-like family.

It is found in the secreted. In terms of biological role, probable phospholipase. This Dictyostelium discoideum (Social amoeba) protein is Phospholipase B-like protein G (plbG).